The following is a 227-amino-acid chain: Ribonuclease 3 (227 aa).

Positions 5 to 127 (LNALQLRLQH…LIGAVYLDAG (123 aa)) constitute an RNase III domain. Mg(2+) is bound at residue glutamate 40. The active site involves aspartate 44. Residues aspartate 113 and glutamate 116 each contribute to the Mg(2+) site. The active site involves glutamate 116. Residues 154-224 (DAKTALQEWL…ATAMLELLKA (71 aa)) enclose the DRBM domain.

It belongs to the ribonuclease III family. As to quaternary structure, homodimer. It depends on Mg(2+) as a cofactor.

The protein localises to the cytoplasm. It catalyses the reaction Endonucleolytic cleavage to 5'-phosphomonoester.. Its function is as follows. Digests double-stranded RNA. Involved in the processing of primary rRNA transcript to yield the immediate precursors to the large and small rRNAs (23S and 16S). Processes some mRNAs, and tRNAs when they are encoded in the rRNA operon. Processes pre-crRNA and tracrRNA of type II CRISPR loci if present in the organism. The chain is Ribonuclease 3 from Delftia acidovorans (strain DSM 14801 / SPH-1).